A 319-amino-acid polypeptide reads, in one-letter code: tRNA pseudouridine synthase B (319 aa).

The active-site Nucleophile is the aspartate 49.

It belongs to the pseudouridine synthase TruB family. Type 1 subfamily.

The enzyme catalyses uridine(55) in tRNA = pseudouridine(55) in tRNA. In terms of biological role, responsible for synthesis of pseudouridine from uracil-55 in the psi GC loop of transfer RNAs. The chain is tRNA pseudouridine synthase B from Bartonella henselae (strain ATCC 49882 / DSM 28221 / CCUG 30454 / Houston 1) (Rochalimaea henselae).